The chain runs to 190 residues: Large ribosomal subunit protein uL10 (190 aa).

It belongs to the universal ribosomal protein uL10 family. In terms of assembly, part of the ribosomal stalk of the 50S ribosomal subunit. The N-terminus interacts with L11 and the large rRNA to form the base of the stalk. The C-terminus forms an elongated spine to which L12 dimers bind in a sequential fashion forming a multimeric L10(L12)X complex.

Its function is as follows. Forms part of the ribosomal stalk, playing a central role in the interaction of the ribosome with GTP-bound translation factors. The polypeptide is Large ribosomal subunit protein uL10 (Trichodesmium erythraeum (strain IMS101)).